We begin with the raw amino-acid sequence, 377 residues long: Succinyl-diaminopimelate desuccinylase (377 aa).

Zn(2+) is bound at residue His-66. The active site involves Asp-68. Asp-99 provides a ligand contact to Zn(2+). Glu-133 functions as the Proton acceptor in the catalytic mechanism. Glu-134, Glu-162, and His-348 together coordinate Zn(2+).

It belongs to the peptidase M20A family. DapE subfamily. Homodimer. Zn(2+) is required as a cofactor. It depends on Co(2+) as a cofactor.

The enzyme catalyses N-succinyl-(2S,6S)-2,6-diaminopimelate + H2O = (2S,6S)-2,6-diaminopimelate + succinate. Its pathway is amino-acid biosynthesis; L-lysine biosynthesis via DAP pathway; LL-2,6-diaminopimelate from (S)-tetrahydrodipicolinate (succinylase route): step 3/3. In terms of biological role, catalyzes the hydrolysis of N-succinyl-L,L-diaminopimelic acid (SDAP), forming succinate and LL-2,6-diaminopimelate (DAP), an intermediate involved in the bacterial biosynthesis of lysine and meso-diaminopimelic acid, an essential component of bacterial cell walls. The chain is Succinyl-diaminopimelate desuccinylase from Xylella fastidiosa (strain 9a5c).